The chain runs to 245 residues: Large ribosomal subunit protein uL2 (245 aa).

The segment at 196–226 is disordered; that stretch reads SPYAHPHGGGSHQKGGTPVSKTAPPGQKVGF.

Belongs to the universal ribosomal protein uL2 family. As to quaternary structure, part of the 50S ribosomal subunit. Forms a bridge to the 30S subunit in the 70S ribosome.

In terms of biological role, one of the primary rRNA binding proteins. Required for association of the 30S and 50S subunits to form the 70S ribosome, for tRNA binding and peptide bond formation. It has been suggested to have peptidyltransferase activity; this is somewhat controversial. Makes several contacts with the 16S rRNA in the 70S ribosome. The chain is Large ribosomal subunit protein uL2 from Pyrobaculum neutrophilum (strain DSM 2338 / JCM 9278 / NBRC 100436 / V24Sta) (Thermoproteus neutrophilus).